A 91-amino-acid polypeptide reads, in one-letter code: MAHTQEEIIAELGQIVEEVTGIEPSEVTVDKSFVDDLDIDSLSMVEIAVQTEDKYGVKVPDEDLAGLRTVGDIVAYIQKLEAEGAEAKNAE.

A Carrier domain is found at 6 to 81 (EEIIAELGQI…DIVAYIQKLE (76 aa)). O-(pantetheine 4'-phosphoryl)serine is present on S41.

This sequence belongs to the acyl carrier protein (ACP) family. Post-translationally, 4'-phosphopantetheine is transferred from CoA to a specific serine of apo-ACP by AcpS. This modification is essential for activity because fatty acids are bound in thioester linkage to the sulfhydryl of the prosthetic group.

Its subcellular location is the cytoplasm. It participates in lipid metabolism; fatty acid biosynthesis. In terms of biological role, carrier of the growing fatty acid chain in fatty acid biosynthesis. The sequence is that of Acyl carrier protein from Rhodococcus erythropolis (strain PR4 / NBRC 100887).